A 62-amino-acid polypeptide reads, in one-letter code: Large ribosomal subunit protein uL29 (62 aa).

This sequence belongs to the universal ribosomal protein uL29 family.

The protein is Large ribosomal subunit protein uL29 of Chromobacterium violaceum (strain ATCC 12472 / DSM 30191 / JCM 1249 / CCUG 213 / NBRC 12614 / NCIMB 9131 / NCTC 9757 / MK).